We begin with the raw amino-acid sequence, 217 residues long: MAQKDHPNGPKKSASASSKRWMYEHVNDFYVKEATKKGLRSRAVFKLEEINKKDKLIRSGMTVVDLGAAPGSWSQWAVDTVGLKGKVIACDILPMDSIAGVDFLQGDFREDAVVNALLARIAGHKVDVVLSDMSPNMTGTVGIDQPKSMYLVELALEMCKEVLVKEGSFVVKVFMGSEFDLFMSEARKCFKSVKTRKPDSSRSRSREVYVVATGYKG.

Residues Gly71, Trp73, Asp91, Asp107, and Asp132 each coordinate S-adenosyl-L-methionine. Lys172 serves as the catalytic Proton acceptor.

This sequence belongs to the class I-like SAM-binding methyltransferase superfamily. RNA methyltransferase RlmE family.

The protein resides in the cytoplasm. It catalyses the reaction uridine(2552) in 23S rRNA + S-adenosyl-L-methionine = 2'-O-methyluridine(2552) in 23S rRNA + S-adenosyl-L-homocysteine + H(+). Functionally, specifically methylates the uridine in position 2552 of 23S rRNA at the 2'-O position of the ribose in the fully assembled 50S ribosomal subunit. In Psychromonas ingrahamii (strain DSM 17664 / CCUG 51855 / 37), this protein is Ribosomal RNA large subunit methyltransferase E.